We begin with the raw amino-acid sequence, 43 residues long: Protein PsbN (43 aa).

The chain crosses the membrane as a helical span at residues 7–24; the sequence is VAISISRSLVSFTGYALY.

Belongs to the PsbN family.

It localises to the plastid. The protein localises to the chloroplast thylakoid membrane. In terms of biological role, may play a role in photosystem I and II biogenesis. The polypeptide is Protein PsbN (Ginkgo biloba (Ginkgo)).